An 84-amino-acid polypeptide reads, in one-letter code: Envelope glycoprotein N (84 aa).

An N-terminal signal peptide occupies residues 1 to 26; it reads MSCKKGARQRLYVSLWLFYILVFAAA. The Virion surface segment spans residues 27-45; it reads TEMDFYSSECHSHTYEIVL. A helical membrane pass occupies residues 46–66; it reads NSFSSIWLLINLFLLLCSFAI. The Intravirion portion of the chain corresponds to 67–84; it reads FLKYWCYKTFASETVKGY.

It belongs to the herpesviridae glycoprotein N family. Interacts (via N-terminus) with gM (via N-terminus). The gM-gN heterodimer forms the gCII complex.

The protein localises to the virion membrane. It is found in the host membrane. It localises to the host Golgi apparatus. Its subcellular location is the host trans-Golgi network. Envelope glycoprotein necessary for proper maturation of gM and modulation of its membrane fusion activity. Also plays a critical role in virion morphogenesis. This chain is Envelope glycoprotein N, found in Human herpesvirus 6B (strain Z29) (HHV-6 variant B).